A 721-amino-acid chain; its full sequence is Glucans biosynthesis glucosyltransferase H (721 aa).

Transmembrane regions (helical) follow at residues 54–74, 85–105, 404–424, 458–478, 493–513, 548–568, and 569–589; these read LIMV…YQVL, VVLV…VSAL, GIGA…GILI, FAGT…LVLI, FGGV…MMVF, YALP…VSWP, and LLLW…VALL.

It belongs to the glycosyltransferase 2 family. OpgH subfamily.

It is found in the cell inner membrane. The protein operates within glycan metabolism; osmoregulated periplasmic glucan (OPG) biosynthesis. Its function is as follows. Involved in the biosynthesis of osmoregulated periplasmic glucans (OPGs). The chain is Glucans biosynthesis glucosyltransferase H from Rhodopseudomonas palustris (strain TIE-1).